The sequence spans 312 residues: Epoxyqueuosine reductase (312 aa).

Catalysis depends on Asp132, which acts as the Proton donor. Positions 174–206 (EVLEADKPSKPICGECEKCIEACPTKAIEEPFI) constitute a 4Fe-4S ferredoxin-type 1 domain. 8 residues coordinate [4Fe-4S] cluster: Cys186, Cys189, Cys192, Cys196, Cys212, Cys240, Cys243, and Cys247. Positions 226-257 (PENIINKMGNWIAGCDICQDVCPWNQKHIPST) constitute a 4Fe-4S ferredoxin-type 2 domain.

The protein belongs to the QueG family. In terms of assembly, monomer. Cob(II)alamin serves as cofactor. [4Fe-4S] cluster is required as a cofactor.

The protein resides in the cytoplasm. The catalysed reaction is epoxyqueuosine(34) in tRNA + AH2 = queuosine(34) in tRNA + A + H2O. Its pathway is tRNA modification; tRNA-queuosine biosynthesis. Catalyzes the conversion of epoxyqueuosine (oQ) to queuosine (Q), which is a hypermodified base found in the wobble positions of tRNA(Asp), tRNA(Asn), tRNA(His) and tRNA(Tyr). In Prochlorococcus marinus (strain NATL2A), this protein is Epoxyqueuosine reductase.